Reading from the N-terminus, the 115-residue chain is U3-lycotoxin-Ls1v (115 aa).

A signal peptide spans Met1–Ala20. The propeptide occupies Glu21–Arg44. 4 disulfide bridges follow: Cys48–Cys63, Cys55–Cys72, Cys62–Cys87, and Cys74–Cys85.

Belongs to the neurotoxin 19 (CSTX) family. 01 subfamily. As to expression, expressed by the venom gland.

The protein localises to the secreted. This Lycosa singoriensis (Wolf spider) protein is U3-lycotoxin-Ls1v.